The primary structure comprises 367 residues: UDP-N-acetylglucosamine--N-acetylmuramyl-(pentapeptide) pyrophosphoryl-undecaprenol N-acetylglucosamine transferase (367 aa).

Residues Thr-18–Gly-20, Asn-130, Arg-170, Ser-196, Ile-252, Ala-271–Glu-276, and Gln-297 contribute to the UDP-N-acetyl-alpha-D-glucosamine site.

This sequence belongs to the glycosyltransferase 28 family. MurG subfamily.

The protein localises to the cell inner membrane. It carries out the reaction di-trans,octa-cis-undecaprenyl diphospho-N-acetyl-alpha-D-muramoyl-L-alanyl-D-glutamyl-meso-2,6-diaminopimeloyl-D-alanyl-D-alanine + UDP-N-acetyl-alpha-D-glucosamine = di-trans,octa-cis-undecaprenyl diphospho-[N-acetyl-alpha-D-glucosaminyl-(1-&gt;4)]-N-acetyl-alpha-D-muramoyl-L-alanyl-D-glutamyl-meso-2,6-diaminopimeloyl-D-alanyl-D-alanine + UDP + H(+). The protein operates within cell wall biogenesis; peptidoglycan biosynthesis. Its function is as follows. Cell wall formation. Catalyzes the transfer of a GlcNAc subunit on undecaprenyl-pyrophosphoryl-MurNAc-pentapeptide (lipid intermediate I) to form undecaprenyl-pyrophosphoryl-MurNAc-(pentapeptide)GlcNAc (lipid intermediate II). This is UDP-N-acetylglucosamine--N-acetylmuramyl-(pentapeptide) pyrophosphoryl-undecaprenol N-acetylglucosamine transferase from Shewanella frigidimarina (strain NCIMB 400).